Reading from the N-terminus, the 822-residue chain is Dimethyl sulfoxide/trimethylamine N-oxide reductase (822 aa).

A signal peptide (tat-type signal) is located at residues 1-42 (MTKLSGQELHAELSRRAFLSYTAAVGALGLCGTSLLAQGARA). Residues W158, 158-160 (WKS), S189, 232-233 (KT), 262-263 (IN), 283-285 (QTD), 364-365 (WS), R368, N476, H480, 500-501 (QD), R523, D553, 683-686 (ASHP), R689, 691-693 (HSQ), N779, and 796-797 (GQ) contribute to the Mo-bis(molybdopterin guanine dinucleotide) site.

It belongs to the prokaryotic molybdopterin-containing oxidoreductase family. In terms of assembly, homodimer. Mo-bis(molybdopterin guanine dinucleotide) is required as a cofactor. Post-translationally, predicted to be exported by the Tat system. The position of the signal peptide cleavage has been experimentally proven.

The protein resides in the periplasm. The catalysed reaction is dimethyl sulfide + a menaquinone + H2O = dimethyl sulfoxide + a menaquinol. The enzyme catalyses trimethylamine + 2 Fe(III)-[cytochrome c] + H2O = trimethylamine N-oxide + 2 Fe(II)-[cytochrome c] + 3 H(+). Functionally, catalyzes the reduction of dimethyl sulfoxide (DMSO) and trimethylamine N-oxide (TMAO) to dimethyl sulfide (DMS) and trimethylamine, respectively. The terminal DMSO reductase can also use various sulfoxides and N-oxide compounds as terminal electron acceptor in addition to DMSO and TMAO. This is Dimethyl sulfoxide/trimethylamine N-oxide reductase (dmsA) from Cereibacter sphaeroides (Rhodobacter sphaeroides).